Consider the following 475-residue polypeptide: Ankyrin repeat, SAM and basic leucine zipper domain-containing protein 1 (475 aa).

A phosphoserine mark is found at Ser-17, Ser-18, and Ser-20. ANK repeat units lie at residues 45–74 (EKNE…SVDT), 78–107 (YGWT…NASF), 110–144 (DKQT…DPNM), 148–177 (RLMT…DVNA), 181–210 (NGYT…NKMI), and 214–243 (DGKT…PLEG). Residues 272-334 (SYTAFGDLEI…KILAALKELE (63 aa)) form the SAM domain.

As to quaternary structure, interacts with DDX4, PIWIL1, RANBP9 and TDRD1.

It localises to the cytoplasm. Functionally, plays a central role during spermatogenesis by repressing transposable elements and preventing their mobilization, which is essential for the germline integrity. Acts via the piRNA metabolic process, which mediates the repression of transposable elements during meiosis by forming complexes composed of piRNAs and Piwi proteins and governs the methylation and subsequent repression of transposons. Its association with pi-bodies suggests a participation in the primary piRNAs metabolic process. Required prior to the pachytene stage to facilitate the production of multiple types of piRNAs, including those associated with repeats involved in the regulation of retrotransposons. May act by mediating protein-protein interactions during germ cell maturation. This chain is Ankyrin repeat, SAM and basic leucine zipper domain-containing protein 1 (ASZ1), found in Atelerix albiventris (Middle-African hedgehog).